Here is a 108-residue protein sequence, read N- to C-terminus: T cell receptor alpha variable 1-1 (108 aa).

Residues 1-18 form the signal peptide; sequence MWGAFLLYVSMKMGGTAG. The region spanning 19 to 108 is the Ig-like domain; that stretch reads QSLEQPSEVT…DSASYFCAVR (90 aa). Asparagine 38 is a glycosylation site (N-linked (GlcNAc...) asparagine). Cysteines 39 and 105 form a disulfide.

In terms of assembly, alpha-beta TR is a heterodimer composed of an alpha and beta chain; disulfide-linked. The alpha-beta TR is associated with the transmembrane signaling CD3 coreceptor proteins to form the TR-CD3 (TcR or TCR). The assembly of alpha-beta TR heterodimers with CD3 occurs in the endoplasmic reticulum where a single alpha-beta TR heterodimer associates with one CD3D-CD3E heterodimer, one CD3G-CD3E heterodimer and one CD247 homodimer forming a stable octameric structure. CD3D-CD3E and CD3G-CD3E heterodimers preferentially associate with TR alpha and TR beta chains, respectively. The association of the CD247 homodimer is the last step of TcR assembly in the endoplasmic reticulum and is required for transport to the cell surface.

It is found in the cell membrane. Functionally, v region of the variable domain of T cell receptor (TR) alpha chain that participates in the antigen recognition. Alpha-beta T cell receptors are antigen specific receptors which are essential to the immune response and are present on the cell surface of T lymphocytes. Recognize peptide-major histocompatibility (MH) (pMH) complexes that are displayed by antigen presenting cells (APC), a prerequisite for efficient T cell adaptive immunity against pathogens. Binding of alpha-beta TR to pMH complex initiates TR-CD3 clustering on the cell surface and intracellular activation of LCK that phosphorylates the ITAM motifs of CD3G, CD3D, CD3E and CD247 enabling the recruitment of ZAP70. In turn ZAP70 phosphorylates LAT, which recruits numerous signaling molecules to form the LAT signalosome. The LAT signalosome propagates signal branching to three major signaling pathways, the calcium, the mitogen-activated protein kinase (MAPK) kinase and the nuclear factor NF-kappa-B (NF-kB) pathways, leading to the mobilization of transcription factors that are critical for gene expression and essential for T cell growth and differentiation. The T cell repertoire is generated in the thymus, by V-(D)-J rearrangement. This repertoire is then shaped by intrathymic selection events to generate a peripheral T cell pool of self-MH restricted, non-autoaggressive T cells. Post-thymic interaction of alpha-beta TR with the pMH complexes shapes TR structural and functional avidity. In Homo sapiens (Human), this protein is T cell receptor alpha variable 1-1.